Here is a 3476-residue protein sequence, read N- to C-terminus: Abnormal spindle-like microcephaly-associated protein homolog (3476 aa).

The disordered stretch occupies residues 1–34 (MANRRVGRGCWEVSPTERRPPAGLRGPATEEEAS). 6 positions are modified to phosphoserine: serine 280, serine 283, serine 367, serine 392, serine 425, and serine 605. The region spanning 920–1056 (KASKEILLAF…LLWKIAFAFQ (137 aa)) is the Calponin-homology (CH) 1 domain. Positions 1057–1078 (VDISLNLDQLKEEIAFLKHTKS) form a coiled coil. Serine 1103 is subject to Phosphoserine. In terms of domain architecture, Calponin-homology (CH) 2 spans 1110 to 1261 (SENIKLLMDW…YLSFLCARLL (152 aa)). 38 consecutive IQ domains span residues 1347–1378 (QNKAASLIQGYWRRYSTRKRFLKLKYYSIILQ), 1393–1422 (YLWATVTIQRHWRAYLRRKQDQQRYEMLKS), 1582–1613 (LKKTIIKLQAHIRKHQQVQKYKKMKKAAVIIQ), 1605–1634 (MKKAAVIIQTHFRAYIFTRKVLASYQKTRS), 1632–1661 (TRSAVIVLQSAYRGMQARKVYIHILTSVIK), 1655–1684 (ILTSVIKIQSYYRAYVSKKEFLSLKNTTIK), 1728–1757 (MRESCIKLQAFVRGYLVRKQMRLQRKAVIS), 1751–1782 (QRKAVISLQSYFRMRKARQYYLKMCKAIIVIQ), 1801–1830 (VKKAATCLQAAYRGYKVRQLIKQQSIAALK), 1824–1853 (QSIAALKIQSAFRGYNKRVKYQSVLQSIIK), 1874–1903 (TKAAVVSLQSAYRGWKVRKQIRREHQAALK), 1897–1928 (EHQAALKIQSAFRMAKAQKQFRLFKTAALVIQ), 1947–1978 (LRHAVLILQSMWKGKTLRRQLQRQXKCAIIIQ), 1970–2001 (QXKCAIIIQSYYRMHVQQKKWKIMKKAALLIQ), 2020–2049 (TKAAVVTLQSAYRGMKVRKRIKDCNKAAVT), 2043–2074 (CNKAAVTIQSKYRAYKTKKKYATYRASAIIIQ), 2093–2124 (LKKTAIKIQSVYRGIRVRRHIQHMHRAATFIK), 2116–2147 (MHRAATFIKAMFKMHQSRISYHTMRKAAIVIQ), 2239–2270 (LRHSVIYIQAIFRGKKARRHLKMMHVAATLIQ), 2262–2293 (MHVAATLIQRRFRTLMMRRRFLSLKKTAVWIQ), 2311–2342 (VQNAVIKIQSSYRRWMIRKKMREMHRAATFIQ), 2334–2365 (MHRAATFIQATFRMHRVHMRYQALKQASVVIQ), 2384–2415 (QRRSAVILQAAFRGVKTRRHLKSMHSSATLIQ), 2407–2438 (MHSSATLIQSRFRSLLVRRRFISLKKATIFVQ), 2457–2488 (LRKAAITIQSSYRRLMVKKKLQEMQRAAVLIQ), 2530–2561 (QWHSAVVIQTAYKGMKARQHLREKHKAAIIIQ), 2624–2653 (QHQAAIIIQKHCKAFKIRKHYLHLRATVVS), 2665–2696 (RTQAVICIQSYYRGFKVRRDIQNMHRAATLIQ), 2688–2719 (MHRAATLIQSFYRMHRAKVDYQTKKTAIVVIQ), 2738–2767 (VQKSVRTIQAAFRGMKVRQKLKIVSEEKMA), 2814–2845 (QSRAAVTIQNAFRRMVTRKLETQKCAALRIQF), 2859–2890 (QKRAAITLQHYFRTWQTRKQFLLYRKAAVVLQ), 2909–2938 (IRSSVIIIQARSKGFIQKRKFQEIKNSTIK), 2932–2963 (IKNSTIKIQAMWRRYRAKKYLCKVKAACKIQA), 2954–2985 (KVKAACKIQAWYRCWRAHKEYLAILKAVKIIQ), 3029–3060 (RHRAACLIQAHYRGYKERQVFLRQKSAALIIQ), 3079–3110 (FKKSTVILQALVRGWLVRKRILEQKTKIRLLH), and 3203–3234 (FTSGIIKIQALWRGYSWRKKNDCTKIKAIRLS).

The protein resides in the cytoplasm. It is found in the cytoskeleton. The protein localises to the spindle. It localises to the nucleus. Functionally, probable role in mitotic spindle regulation and coordination of mitotic processes. May have a preferential role in regulating neurogenesis. The sequence is that of Abnormal spindle-like microcephaly-associated protein homolog (ASPM) from Macaca fascicularis (Crab-eating macaque).